The primary structure comprises 348 residues: Protein RecA (348 aa).

65-72 (GPESSGKT) is a binding site for ATP. Residues 326 to 348 (QMGSESLSSSSDDDDIKEESGEE) form a disordered region. The segment covering 336–348 (SDDDDIKEESGEE) has biased composition (acidic residues).

It belongs to the RecA family.

It localises to the cytoplasm. In terms of biological role, can catalyze the hydrolysis of ATP in the presence of single-stranded DNA, the ATP-dependent uptake of single-stranded DNA by duplex DNA, and the ATP-dependent hybridization of homologous single-stranded DNAs. It interacts with LexA causing its activation and leading to its autocatalytic cleavage. The sequence is that of Protein RecA from Campylobacter hominis (strain ATCC BAA-381 / DSM 21671 / CCUG 45161 / LMG 19568 / NCTC 13146 / CH001A).